We begin with the raw amino-acid sequence, 285 residues long: 2,3,4,5-tetrahydropyridine-2,6-dicarboxylate N-succinyltransferase (285 aa).

Positions 111 and 148 each coordinate substrate.

The protein belongs to the transferase hexapeptide repeat family. As to quaternary structure, homotrimer.

The protein resides in the cytoplasm. The catalysed reaction is (S)-2,3,4,5-tetrahydrodipicolinate + succinyl-CoA + H2O = (S)-2-succinylamino-6-oxoheptanedioate + CoA. It participates in amino-acid biosynthesis; L-lysine biosynthesis via DAP pathway; LL-2,6-diaminopimelate from (S)-tetrahydrodipicolinate (succinylase route): step 1/3. The polypeptide is 2,3,4,5-tetrahydropyridine-2,6-dicarboxylate N-succinyltransferase (Allorhizobium ampelinum (strain ATCC BAA-846 / DSM 112012 / S4) (Agrobacterium vitis (strain S4))).